A 318-amino-acid chain; its full sequence is Small ribosomal subunit protein mS26 (318 aa).

The tract at residues 295-318 (IDSKLNPTSNGAGNNGNNNNTTNL) is disordered. The segment covering 300–318 (NPTSNGAGNNGNNNNTTNL) has biased composition (low complexity).

This sequence belongs to the mitochondrion-specific ribosomal protein mS26 family. In terms of assembly, component of the mitochondrial small ribosomal subunit (mt-SSU). Mature yeast 74S mitochondrial ribosomes consist of a small (37S) and a large (54S) subunit. The 37S small subunit contains a 15S ribosomal RNA (15S mt-rRNA) and 34 different proteins. The 54S large subunit contains a 21S rRNA (21S mt-rRNA) and 46 different proteins.

The protein resides in the mitochondrion. Its function is as follows. Component of the mitochondrial ribosome (mitoribosome), a dedicated translation machinery responsible for the synthesis of mitochondrial genome-encoded proteins, including at least some of the essential transmembrane subunits of the mitochondrial respiratory chain. The mitoribosomes are attached to the mitochondrial inner membrane and translation products are cotranslationally integrated into the membrane. The sequence is that of Small ribosomal subunit protein mS26 (PET123) from Saccharomyces cerevisiae (strain ATCC 204508 / S288c) (Baker's yeast).